The sequence spans 839 residues: Genome polyprotein (839 aa).

Residues 55-66 show a composition bias toward polar residues; it reads TAEVGSHQSEPL. A disordered region spans residues 55–76; it reads TAEVGSHQSEPLKTSVDKPGSK. 2 short sequence motifs ((L)YPX(n)L motif) span residues 167–171 and 200–205; these read YPHGL and YPVWEL. The segment covering 496–510 has biased composition (polar residues); sequence SGGFSTTVSTEQNVP. Disordered stretches follow at residues 496-530 and 773-792; these read SGGFSTTVSTEQNVPDPQVGITTPKDLKGKANKGK and GDLESSVDDPRTDEDRRFES. Positions 766–836 are involved in P1-2A pentamerization; that stretch reads MLDRIAGGDL…RKLKGLFSQS (71 aa). Residues 780–792 show a composition bias toward basic and acidic residues; that stretch reads DDPRTDEDRRFES.

It belongs to the picornaviridae polyprotein family. In terms of assembly, homodimer. Homomultimer; probably interacts with membranes in a multimeric form. Seems to assemble into amyloid-like fibers. Homopentamer. Homooligomer. As to quaternary structure, interacts with capsid protein VP2. Interacts with capsid protein VP3. In terms of assembly, interacts with capsid protein VP1. Interacts with capsid protein VP3. Interacts with capsid protein VP1. Interacts with capsid protein VP2. Specific enzymatic cleavages by viral protease in vivo yield a variety of precursors and mature proteins. Polyprotein processing intermediates are produced, such as P1-2A which is a functional precursor of the structural proteins, VP0 which is a VP4-VP2 precursor, VP1-2A precursor, 3ABC precursor which is a stable and catalytically active precursor of 3A, 3B and 3C proteins, 3AB and 3CD precursors. The assembly signal 2A is removed from VP1-2A by a host protease, possibly host Cathepsin L. This cleavage occurs over a region of 3 amino-acids probably generating VP1 proteins with heterogeneous C-termini. In terms of processing, during virion maturation, immature virions are rendered infectious following cleavage of VP0 into VP4 and VP2. This maturation seems to be an autocatalytic event triggered by the presence of RNA in the capsid and is followed by a conformational change of the particle. Post-translationally, the assembly signal 2A is removed from VP1-2A by a host protease, possibly host Cathepsin L in naked virions. This cleavage does not occur in enveloped virions. This cleavage occurs over a region of 3 amino-acids probably generating VP1 proteins with heterogeneous C-termini. Unlike other picornaviruses, does not seem to be myristoylated.

It localises to the virion. It is found in the host endosome. The protein resides in the host multivesicular body. The protein localises to the host membrane. Capsid proteins VP1, VP2, and VP3 form a closed capsid enclosing the viral positive strand RNA genome. All these proteins contain a beta-sheet structure called beta-barrel jelly roll. Together they form an icosahedral capsid (T=3) composed of 60 copies of each VP1, VP2, and VP3, with a diameter of approximately 300 Angstroms. VP1 is situated at the 12 fivefold axes, whereas VP2 and VP3 are located at the quasi-sixfold axes. The naked capsid interacts with the host receptor HAVCR1 to provide virion attachment to and probably entry into the target cell. Its function is as follows. VP0 precursor is a component of the immature procapsids. In terms of biological role, plays a role in the assembly of the 12 pentamers into an icosahedral structure. Has not been detected in mature virions, supposedly owing to its small size. Functionally, precursor component of immature procapsids that corresponds to an extended form of the structural protein VP1. After maturation, possibly by the host Cathepsin L, the assembly signal 2A is cleaved to give rise to the mature VP1 protein. Affects membrane integrity and causes an increase in membrane permeability. Its function is as follows. Functions as a viroporin. Affects membrane integrity and causes an increase in membrane permeability. Involved in host intracellular membrane rearrangements probably to give rise to the viral factories. Does not disrupt calcium homeostasis or glycoprotein trafficking. Antagonizes the innate immune response of the host by suppressing IFN-beta synthesis, which it achieves by interfering with the RIG-I/IFIH1 pathway. The polypeptide is Genome polyprotein (Callithrix (Owl-faced monkey)).